The sequence spans 203 residues: dITP/XTP pyrophosphatase (203 aa).

Position 8–13 (8–13) interacts with substrate; the sequence is TANKGK. Residues E41 and D70 each contribute to the Mg(2+) site. D70 serves as the catalytic Proton acceptor. Substrate is bound by residues S71, 153 to 156, K176, and 181 to 182; these read FGYD and HR.

It belongs to the HAM1 NTPase family. Homodimer. Mg(2+) serves as cofactor.

The enzyme catalyses XTP + H2O = XMP + diphosphate + H(+). It catalyses the reaction dITP + H2O = dIMP + diphosphate + H(+). It carries out the reaction ITP + H2O = IMP + diphosphate + H(+). Pyrophosphatase that catalyzes the hydrolysis of nucleoside triphosphates to their monophosphate derivatives, with a high preference for the non-canonical purine nucleotides XTP (xanthosine triphosphate), dITP (deoxyinosine triphosphate) and ITP. Seems to function as a house-cleaning enzyme that removes non-canonical purine nucleotides from the nucleotide pool, thus preventing their incorporation into DNA/RNA and avoiding chromosomal lesions. This chain is dITP/XTP pyrophosphatase, found in Listeria innocua serovar 6a (strain ATCC BAA-680 / CLIP 11262).